The primary structure comprises 285 residues: Bifunctional protein FolD (285 aa).

NADP(+) contacts are provided by residues 165 to 167 (GRS) and S190.

This sequence belongs to the tetrahydrofolate dehydrogenase/cyclohydrolase family. Homodimer.

It catalyses the reaction (6R)-5,10-methylene-5,6,7,8-tetrahydrofolate + NADP(+) = (6R)-5,10-methenyltetrahydrofolate + NADPH. It carries out the reaction (6R)-5,10-methenyltetrahydrofolate + H2O = (6R)-10-formyltetrahydrofolate + H(+). Its pathway is one-carbon metabolism; tetrahydrofolate interconversion. Its function is as follows. Catalyzes the oxidation of 5,10-methylenetetrahydrofolate to 5,10-methenyltetrahydrofolate and then the hydrolysis of 5,10-methenyltetrahydrofolate to 10-formyltetrahydrofolate. The chain is Bifunctional protein FolD from Burkholderia mallei (strain NCTC 10247).